The following is a 236-amino-acid chain: Ribose-5-phosphate isomerase A (236 aa).

Substrate contacts are provided by residues 31 to 34, 84 to 87, and 97 to 100; these read TGST, DGAD, and KGGG. The Proton acceptor role is filled by E106. Position 124 (K124) interacts with substrate.

This sequence belongs to the ribose 5-phosphate isomerase family. Homodimer.

The catalysed reaction is aldehydo-D-ribose 5-phosphate = D-ribulose 5-phosphate. Its pathway is carbohydrate degradation; pentose phosphate pathway; D-ribose 5-phosphate from D-ribulose 5-phosphate (non-oxidative stage): step 1/1. Catalyzes the reversible conversion of ribose-5-phosphate to ribulose 5-phosphate. This Polynucleobacter necessarius subsp. necessarius (strain STIR1) protein is Ribose-5-phosphate isomerase A.